Here is a 354-residue protein sequence, read N- to C-terminus: MATRQPYQKKFQSRDQREQTSSQQAPNSVVKQVTVDALVVMKIIKHARENPHEPVRGPLLGLSQLADASKPGEDALLEVTNCFPTPRVSDDDDDSIVQQYQVQMMRWLREVNVDHMNVGWYQAADMGTFFDEDVAAVQFQHQRHMAESVVLIYDPVLTLQGTLSLSAFRLSNKAMELFSTDSFNPKAVREAGLTYRTVFEKVPVTIRASSMARLLIPELSANLDQSEIFDRMDLNATSFMSRNIKLLMEGIDDLSQEAYKFQQYHRNATKAKASLDAQLEARRAENEQLRAKGLPEKSEAELVANHKTPTPPSRLGSLLVTAQINTFCKQVSDFSGQSFGKLYIAKATQPEAEE.

The segment at M1 to S28 is disordered. Residues Q19–S28 are compositionally biased toward polar residues. Positions V33–A174 constitute an MPN domain.

The protein belongs to the eIF-3 subunit H family. In terms of assembly, component of the eukaryotic translation initiation factor 3 (eIF-3) complex.

Its subcellular location is the cytoplasm. Its function is as follows. Component of the eukaryotic translation initiation factor 3 (eIF-3) complex, which is involved in protein synthesis of a specialized repertoire of mRNAs and, together with other initiation factors, stimulates binding of mRNA and methionyl-tRNAi to the 40S ribosome. The eIF-3 complex specifically targets and initiates translation of a subset of mRNAs involved in cell proliferation. This is Eukaryotic translation initiation factor 3 subunit H from Monosiga brevicollis (Choanoflagellate).